The sequence spans 571 residues: Arginine--tRNA ligase (571 aa).

The 'HIGH' region signature appears at 122 to 132 (PNIAKEMHVGH).

The protein belongs to the class-I aminoacyl-tRNA synthetase family. In terms of assembly, monomer.

The protein resides in the cytoplasm. It carries out the reaction tRNA(Arg) + L-arginine + ATP = L-arginyl-tRNA(Arg) + AMP + diphosphate. The chain is Arginine--tRNA ligase from Buchnera aphidicola subsp. Cinara cedri (strain Cc).